The sequence spans 282 residues: Type 1 encapsulin shell protein (282 aa).

It belongs to the encapsulin family. Family 1 subfamily. In terms of assembly, initially thought to form a 180 subunit shell. Forms hollow shells composed of 240 subunits, making a shell about 42-43 nm in diameter. The monomer is capable of assuming 4 different conformations which allows packaging into the icosahedron. The shell has 12 pentameric and 30 hexameric capsomers which form the vertices and faces of the icosahedral nanocompartment.

It localises to the encapsulin nanocompartment. Its function is as follows. Shell component of a type 1 encapsulin nanocompartment. Assembles into proteinaceous icosahedral shells 42-43 nm in diameter with an iron- and phosphorus-rich core (1Fe:1.1P) which can store over 23,000-35,000 iron atoms (with a calculated maximum of 83,000 Fe). There are 2 types of negatively charged open pores in the cryo-electron structure; a 3-fold pore where 3 hexamers meet with a minimal size of 7.2 Angstroms and a 5-fold pore where pentamers meet with a minimal size of 2.3 Angstroms. The 2-fold pore seen in other encapsulin nanocompartments is closed. Empty compartments can be generated in E.coli. Both types of pore have extra density in their centers in the structure. 2 different cargo proteins have been identified (IMEF and Fer); when both are expressed in E.coli with the shell protein only IMEF is detected within the nanocompartment. E.coli expressing all 3 genes stores the largest amount of iron and is protected from Fe/H2O2-induced oxidative stress. Part of the iron-mineralizing encapsulin-associated Firmicute (IMEF) system. The chain is Type 1 encapsulin shell protein from Bacillus thermotolerans (Quasibacillus thermotolerans).